A 161-amino-acid polypeptide reads, in one-letter code: Serine-protein kinase RsbW (161 aa).

The protein belongs to the anti-sigma-factor family.

It catalyses the reaction L-seryl-[protein] + ATP = O-phospho-L-seryl-[protein] + ADP + H(+). It carries out the reaction L-threonyl-[protein] + ATP = O-phospho-L-threonyl-[protein] + ADP + H(+). In terms of biological role, negative regulator of sigma-B activity. Phosphorylates and inactivates its specific antagonist protein, RsbV. Upon phosphorylation of RsbV, RsbW is released and binds to sigma-B, thereby blocking its ability to form an RNA polymerase holoenzyme (E-sigma-B). In Bacillus licheniformis (strain ATCC 14580 / DSM 13 / JCM 2505 / CCUG 7422 / NBRC 12200 / NCIMB 9375 / NCTC 10341 / NRRL NRS-1264 / Gibson 46), this protein is Serine-protein kinase RsbW.